The sequence spans 424 residues: Serine hydroxymethyltransferase (424 aa).

Residues Leu113 and Gly117 to Leu119 contribute to the (6S)-5,6,7,8-tetrahydrofolate site. Lys222 carries the N6-(pyridoxal phosphate)lysine modification. A (6S)-5,6,7,8-tetrahydrofolate-binding site is contributed by Ser361–Phe363.

Belongs to the SHMT family. In terms of assembly, homodimer. It depends on pyridoxal 5'-phosphate as a cofactor.

It is found in the cytoplasm. It catalyses the reaction (6R)-5,10-methylene-5,6,7,8-tetrahydrofolate + glycine + H2O = (6S)-5,6,7,8-tetrahydrofolate + L-serine. It functions in the pathway one-carbon metabolism; tetrahydrofolate interconversion. Its pathway is amino-acid biosynthesis; glycine biosynthesis; glycine from L-serine: step 1/1. Catalyzes the reversible interconversion of serine and glycine with tetrahydrofolate (THF) serving as the one-carbon carrier. This reaction serves as the major source of one-carbon groups required for the biosynthesis of purines, thymidylate, methionine, and other important biomolecules. Also exhibits THF-independent aldolase activity toward beta-hydroxyamino acids, producing glycine and aldehydes, via a retro-aldol mechanism. The polypeptide is Serine hydroxymethyltransferase (Flavobacterium psychrophilum (strain ATCC 49511 / DSM 21280 / CIP 103535 / JIP02/86)).